A 274-amino-acid chain; its full sequence is Large ribosomal subunit protein uL2cz/uL2cy (274 aa).

Disordered regions lie at residues 1–21 (MAIH…VDSQ) and 224–274 (NPVD…RRSK).

Belongs to the universal ribosomal protein uL2 family. Part of the 50S ribosomal subunit.

It localises to the plastid. Its subcellular location is the chloroplast. The polypeptide is Large ribosomal subunit protein uL2cz/uL2cy (rpl2-A) (Gossypium hirsutum (Upland cotton)).